Reading from the N-terminus, the 130-residue chain is Small ribosomal subunit protein uS9 (130 aa).

This sequence belongs to the universal ribosomal protein uS9 family.

This chain is Small ribosomal subunit protein uS9, found in Cupriavidus pinatubonensis (strain JMP 134 / LMG 1197) (Cupriavidus necator (strain JMP 134)).